A 20-amino-acid chain; its full sequence is 21 kDa cold shock-induced protein (20 aa).

Residues 1–12 (TDSIKETIKETV) show a composition bias toward basic and acidic residues. The segment at 1–20 (TDSIKETIKETVNHQAEWPY) is disordered.

The protein is 21 kDa cold shock-induced protein of Streptococcus thermophilus.